Here is a 426-residue protein sequence, read N- to C-terminus: Histidine--tRNA ligase (426 aa).

The protein belongs to the class-II aminoacyl-tRNA synthetase family.

The protein localises to the cytoplasm. It carries out the reaction tRNA(His) + L-histidine + ATP = L-histidyl-tRNA(His) + AMP + diphosphate + H(+). The sequence is that of Histidine--tRNA ligase from Saccharolobus solfataricus (strain ATCC 35092 / DSM 1617 / JCM 11322 / P2) (Sulfolobus solfataricus).